A 1358-amino-acid chain; its full sequence is Phosphoinositide 3-kinase regulatory subunit 4 (1358 aa).

Gly2 is lipidated: N-myristoyl glycine. A Protein kinase domain is found at 26-324 (FEYDKSLGST…AFPEIFYTFL (299 aa)). ATP-binding positions include 32–40 (LGSTRFFKV) and Lys53. Residue Asp148 is the Proton acceptor of the active site. HEAT repeat units lie at residues 373-411 (NGLV…RLGV), 413-450 (ILLD…LVKE), 458-495 (IYPE…TALR), 531-570 (QALH…FFGR), 572-610 (KAND…YVGW), 612-648 (SSSI…LGLL), and 690-726 (DVYC…PVSR). Residues Ser808, Ser813, Ser853, and Ser865 each carry the phosphoserine modification. The interval 875 to 899 (LPKGSDQEVIQTGKPPRSESSAGIC) is disordered. WD repeat units lie at residues 991-1030 (EHKS…GKTT), 1040-1079 (RVGG…LPKS), 1093-1134 (KEDG…NAWT), 1139-1178 (LKSG…PISS), 1182-1223 (PSRA…RRFT), and 1237-1278 (PSPH…RSYV). The interval 1307-1326 (KQKVGPSDDTPRRGPESLPV) is disordered. Basic and acidic residues predominate over residues 1315–1326 (DTPRRGPESLPV). Thr1316 is modified (phosphothreonine). A WD 7 repeat occupies 1327–1358 (GHHDIITDVATFQTTQGFIVTASRDGIVKVWK).

It belongs to the protein kinase superfamily. Ser/Thr protein kinase family. In terms of assembly, component of the PI3K (PI3KC3/PI3K-III/class III phosphatidylinositol 3-kinase) complex the core of which is composed of the catalytic subunit PIK3C3, the regulatory subunit PIK3R4 and BECN1 associating with additional regulatory/auxiliary subunits to form alternative complex forms. Alternative complex forms containing a fourth regulatory subunit in a mutually exclusive manner are PI3K complex I (PI3KC3-C1) containing ATG14, and PI3K complex II (PI3KC3-C2) containing UVRAG. PI3KC3-C1 displays a V-shaped architecture with PIK3R4 serving as a bridge between PIK3C3 and the ATG14:BECN1 subcomplex. Both, PI3KC3-C1 and PI3KC3-C2, can associate with further regulatory subunits, such as RUBCN, SH3GLB1/Bif-1, AMBRA1 and NRBF2. PI3KC3-C1 probably associates with PIK3CB. Interacts with RAB7A in the presence of PIK3C3/VPS34. Interacts with NRBF2. Interacts with ARMC3. It depends on Mn(2+) as a cofactor. In terms of processing, myristoylated. Post-translationally, probably autophosphorylated.

It is found in the late endosome. Its subcellular location is the cytoplasmic vesicle. The protein resides in the autophagosome. The protein localises to the membrane. It catalyses the reaction L-seryl-[protein] + ATP = O-phospho-L-seryl-[protein] + ADP + H(+). The catalysed reaction is L-threonyl-[protein] + ATP = O-phospho-L-threonyl-[protein] + ADP + H(+). Its function is as follows. Regulatory subunit of the PI3K complex that mediates formation of phosphatidylinositol 3-phosphate; different complex forms are believed to play a role in multiple membrane trafficking pathways: PI3KC3-C1 is involved in initiation of autophagosomes and PI3KC3-C2 in maturation of autophagosomes and endocytosis. Involved in regulation of degradative endocytic trafficking and cytokinesis, probably in the context of PI3KC3-C2. Functionally, regulatory subunit of the PI3K complex. May regulate membrane trafficking late in the endocytic pathway. This Pongo abelii (Sumatran orangutan) protein is Phosphoinositide 3-kinase regulatory subunit 4 (PIK3R4).